The following is a 172-amino-acid chain: Small ribosomal subunit protein uS5 (172 aa).

The S5 DRBM domain occupies 17-80 (LREKMISVNR…DEARRKMVKV (64 aa)).

The protein belongs to the universal ribosomal protein uS5 family. In terms of assembly, part of the 30S ribosomal subunit. Contacts proteins S4 and S8.

Its function is as follows. With S4 and S12 plays an important role in translational accuracy. Located at the back of the 30S subunit body where it stabilizes the conformation of the head with respect to the body. This is Small ribosomal subunit protein uS5 from Cupriavidus taiwanensis (strain DSM 17343 / BCRC 17206 / CCUG 44338 / CIP 107171 / LMG 19424 / R1) (Ralstonia taiwanensis (strain LMG 19424)).